Here is a 196-residue protein sequence, read N- to C-terminus: Small ribosomal subunit protein uS4c (196 aa).

The disordered stretch occupies residues 17 to 36 (ALPGLTRKTPKSGSNLKKKF). The region spanning 89–150 (MRLDNILFRL…NQRSKRLIQN (62 aa)) is the S4 RNA-binding domain.

It belongs to the universal ribosomal protein uS4 family. Part of the 30S ribosomal subunit. Contacts protein S5. The interaction surface between S4 and S5 is involved in control of translational fidelity.

The protein localises to the plastid. Its subcellular location is the chloroplast. One of the primary rRNA binding proteins, it binds directly to 16S rRNA where it nucleates assembly of the body of the 30S subunit. In terms of biological role, with S5 and S12 plays an important role in translational accuracy. The protein is Small ribosomal subunit protein uS4c (rps4) of Phyllostachys flexuosa (Drooping timber bamboo).